The primary structure comprises 281 residues: 4-diphosphocytidyl-2-C-methyl-D-erythritol kinase (281 aa).

Residue Lys11 is part of the active site. ATP is bound at residue 95-105; it reads PVAAGLGGGSS. Residue Asp137 is part of the active site.

The protein belongs to the GHMP kinase family. IspE subfamily.

The enzyme catalyses 4-CDP-2-C-methyl-D-erythritol + ATP = 4-CDP-2-C-methyl-D-erythritol 2-phosphate + ADP + H(+). The protein operates within isoprenoid biosynthesis; isopentenyl diphosphate biosynthesis via DXP pathway; isopentenyl diphosphate from 1-deoxy-D-xylulose 5-phosphate: step 3/6. Its function is as follows. Catalyzes the phosphorylation of the position 2 hydroxy group of 4-diphosphocytidyl-2C-methyl-D-erythritol. This Geobacter metallireducens (strain ATCC 53774 / DSM 7210 / GS-15) protein is 4-diphosphocytidyl-2-C-methyl-D-erythritol kinase.